The following is a 208-amino-acid chain: Glycerol-3-phosphate acyltransferase 1 (208 aa).

Transmembrane regions (helical) follow at residues 52 to 72 (VVLMDLAKGALAVSVAYYLLI), 77 to 97 (WVILTGFAAVIGHNWPIWLDF), 112 to 132 (FLLPVYGLPQHLLILALLVFI), 140 to 160 (IALATGIALFSLPFLVWYGSH), and 161 to 181 (SEFATLISVLLFLMIGIKFVL).

The protein belongs to the PlsY family. In terms of assembly, probably interacts with PlsX.

It localises to the cell membrane. The catalysed reaction is an acyl phosphate + sn-glycerol 3-phosphate = a 1-acyl-sn-glycero-3-phosphate + phosphate. It functions in the pathway lipid metabolism; phospholipid metabolism. Its function is as follows. Catalyzes the transfer of an acyl group from acyl-phosphate (acyl-PO(4)) to glycerol-3-phosphate (G3P) to form lysophosphatidic acid (LPA). This enzyme utilizes acyl-phosphate as fatty acyl donor, but not acyl-CoA or acyl-ACP. The protein is Glycerol-3-phosphate acyltransferase 1 of Dehalococcoides mccartyi (strain ATCC BAA-2266 / KCTC 15142 / 195) (Dehalococcoides ethenogenes (strain 195)).